A 1405-amino-acid chain; its full sequence is DNA-directed RNA polymerase III subunit rpc1 (1405 aa).

Positions 66, 69, 76, 79, 106, 109, and 153 each coordinate Zn(2+). D493, D495, and D497 together coordinate Mg(2+). A bridging helix region spans residues 838-850 (PTEFLFHAISGRE).

Belongs to the RNA polymerase beta' chain family. As to quaternary structure, component of the RNA polymerase III (Pol III) complex consisting of 17 subunits.

Its subcellular location is the nucleus. The catalysed reaction is RNA(n) + a ribonucleoside 5'-triphosphate = RNA(n+1) + diphosphate. In terms of biological role, DNA-dependent RNA polymerase catalyzes the transcription of DNA into RNA using the four ribonucleoside triphosphates as substrates. Largest and catalytic core component of RNA polymerase III which synthesizes small RNAs, such as 5S rRNA and tRNAs. Forms the polymerase active center together with the second largest subunit. A single-stranded DNA template strand of the promoter is positioned within the central active site cleft of Pol III. A bridging helix emanates from RPC1 and crosses the cleft near the catalytic site and is thought to promote translocation of Pol III by acting as a ratchet that moves the RNA-DNA hybrid through the active site by switching from straight to bent conformations at each step of nucleotide addition. This Schizosaccharomyces pombe (strain 972 / ATCC 24843) (Fission yeast) protein is DNA-directed RNA polymerase III subunit rpc1 (rpc1).